A 328-amino-acid polypeptide reads, in one-letter code: Phosphate acyltransferase (328 aa).

Belongs to the PlsX family. In terms of assembly, homodimer. Probably interacts with PlsY.

It is found in the cytoplasm. The enzyme catalyses a fatty acyl-[ACP] + phosphate = an acyl phosphate + holo-[ACP]. It functions in the pathway lipid metabolism; phospholipid metabolism. In terms of biological role, catalyzes the reversible formation of acyl-phosphate (acyl-PO(4)) from acyl-[acyl-carrier-protein] (acyl-ACP). This enzyme utilizes acyl-ACP as fatty acyl donor, but not acyl-CoA. This chain is Phosphate acyltransferase, found in Staphylococcus aureus (strain MRSA252).